The primary structure comprises 80 residues: uncharacterized protein (80 aa).

The interval 57 to 80 is disordered; the sequence is GNIDSDVSDQDQIGNPSAPISNQI.

This is an uncharacterized protein from Bacillus subtilis (strain 168).